Here is a 115-residue protein sequence, read N- to C-terminus: Movement protein TGB2 (115 aa).

Residues 1–13 are Cytoplasmic-facing; that stretch reads MSAQGHRLTAPVN. A helical transmembrane segment spans residues 14 to 34; sequence SEKVYIVLGLSFALVSITFLL. Residues 35–74 lie on the Lumenal side of the membrane; the sequence is SRNSLPHVGDNIHSLPHGGAYRDGTKAILYNSPNLGSRVS. Residues 75–95 traverse the membrane as a helical segment; it reads LHNGKNAAFAAVLLLTLLIYG. The Cytoplasmic portion of the chain corresponds to 96–115; the sequence is SKYISQRNHTCACGNNHSSH.

This sequence belongs to the Tymovirales TGBp2 protein family.

It localises to the host endoplasmic reticulum membrane. Plays a role in viral cell-to-cell propagation, by facilitating genome transport to neighboring plant cells through plasmosdesmata,. This chain is Movement protein TGB2, found in Potato virus X (PVX).